The primary structure comprises 257 residues: Pantothenate synthetase (257 aa).

29 to 36 (MGNLHAGH) contacts ATP. The active-site Proton donor is His-36. Gln-60 contacts (R)-pantoate. Gln-60 provides a ligand contact to beta-alanine. 145–148 (GEKD) is an ATP binding site. Gln-151 contacts (R)-pantoate. Residues Val-174 and 182 to 185 (LSSR) contribute to the ATP site.

Belongs to the pantothenate synthetase family. In terms of assembly, homodimer.

Its subcellular location is the cytoplasm. The enzyme catalyses (R)-pantoate + beta-alanine + ATP = (R)-pantothenate + AMP + diphosphate + H(+). The protein operates within cofactor biosynthesis; (R)-pantothenate biosynthesis; (R)-pantothenate from (R)-pantoate and beta-alanine: step 1/1. Its function is as follows. Catalyzes the condensation of pantoate with beta-alanine in an ATP-dependent reaction via a pantoyl-adenylate intermediate. In Coxiella burnetii (strain CbuK_Q154) (Coxiella burnetii (strain Q154)), this protein is Pantothenate synthetase.